Consider the following 61-residue polypeptide: Metallothionein-1 (61 aa).

M1 is modified (N-acetylmethionine). The tract at residues 1–29 (MDPNCSCSTGGSCTCSSSCGCKNCKCTSC) is beta. Residues C5, C7, C13, C15, C19, C21, C24, C26, C29, C33, C34, C36, C37, C41, C44, C48, C50, C57, C59, and C60 each contribute to the a divalent metal cation site. The segment at 30-61 (KKSCCSCCPVGCSKCAQGCVCKGASDKCTCCA) is alpha.

It belongs to the metallothionein superfamily. Type 1 family.

Metallothioneins have a high content of cysteine residues that bind various heavy metals; these proteins are transcriptionally regulated by both heavy metals and glucocorticoids. The chain is Metallothionein-1 (Mt1) from Rattus norvegicus (Rat).